Reading from the N-terminus, the 474-residue chain is 3-isopropylmalate dehydratase large subunit (474 aa).

A disordered region spans residues 293-313 (GTTPGQGIGITEEIPAPEDLP). [4Fe-4S] cluster contacts are provided by Cys348, Cys408, and Cys411.

It belongs to the aconitase/IPM isomerase family. LeuC type 1 subfamily. In terms of assembly, heterodimer of LeuC and LeuD. [4Fe-4S] cluster serves as cofactor.

The catalysed reaction is (2R,3S)-3-isopropylmalate = (2S)-2-isopropylmalate. The protein operates within amino-acid biosynthesis; L-leucine biosynthesis; L-leucine from 3-methyl-2-oxobutanoate: step 2/4. Catalyzes the isomerization between 2-isopropylmalate and 3-isopropylmalate, via the formation of 2-isopropylmaleate. In Natronomonas pharaonis (strain ATCC 35678 / DSM 2160 / CIP 103997 / JCM 8858 / NBRC 14720 / NCIMB 2260 / Gabara) (Halobacterium pharaonis), this protein is 3-isopropylmalate dehydratase large subunit.